Reading from the N-terminus, the 845-residue chain is uncharacterized protein (845 aa).

Residues 224 to 241 (SNNIPTGIQDSSKYTVNG) show a composition bias toward polar residues. Disordered stretches follow at residues 224–244 (SNNI…GPTE), 324–346 (QGTE…ANNG), 383–434 (RTAN…EGSA), 456–485 (VKAS…ATLN), 519–619 (NMTL…PKNS), 674–701 (VVSR…DSSP), and 739–785 (RKST…ANKS). Residues 390–399 (PTKKSNRSEQ) are compositionally biased toward basic and acidic residues. A compositionally biased stretch (polar residues) spans 400-422 (SKTVANTNVGSKNGTTPRSFAQK). Over residues 534–546 (NSWRSKYLSEGKN) the composition is skewed to basic and acidic residues. Positions 563-576 (SSLASPTKSSASPL) are enriched in low complexity. Serine 567 bears the Phosphoserine mark. Composition is skewed to basic and acidic residues over residues 579–588 (APKETPERLC) and 600–614 (ANLK…KSDI). 3 stretches are compositionally biased toward polar residues: residues 674–683 (VVSRTVTSPK), 691–701 (SKASYNQDSSP), and 743–760 (ADSL…TPKA).

It is found in the mitochondrion. This is an uncharacterized protein from Schizosaccharomyces pombe (strain 972 / ATCC 24843) (Fission yeast).